A 172-amino-acid chain; its full sequence is Large ribosomal subunit protein uL10 (172 aa).

This sequence belongs to the universal ribosomal protein uL10 family. As to quaternary structure, part of the ribosomal stalk of the 50S ribosomal subunit. The N-terminus interacts with L11 and the large rRNA to form the base of the stalk. The C-terminus forms an elongated spine to which L12 dimers bind in a sequential fashion forming a multimeric L10(L12)X complex.

Forms part of the ribosomal stalk, playing a central role in the interaction of the ribosome with GTP-bound translation factors. The protein is Large ribosomal subunit protein uL10 of Dinoroseobacter shibae (strain DSM 16493 / NCIMB 14021 / DFL 12).